The following is a 377-amino-acid chain: Guanine nucleotide-binding protein subunit beta (377 aa).

WD repeat units lie at residues 63–93 (GHTGKVYSLDWTPEKNRIVSASQDGRLIVWN), 105–135 (LPCAWVMTCAFSPSGHSVACGGLDSVCSIFN), 154–185 (GHKGYVSSCQYVPDEDTHLITSSGDQTCVLWD), 202–233 (GHTADVQSVSISSSNPRLFVSGSCDTTARLWD), 246–276 (CHEGDVNTVKFFPDGNRFGTGSEDGTCRLFD), 293–323 (GDIPHVTSMAFSISGRLLFVRYSNGDCYVWD), and 339–369 (SHEGXISCLGLSADGXXLCTGSWDTNLKIWA).

It belongs to the WD repeat G protein beta family. G proteins are composed of 3 units, alpha, beta and gamma.

It localises to the cell membrane. It is found in the endoplasmic reticulum membrane. Functionally, guanine nucleotide-binding proteins (G proteins) are involved as a modulator or transducer in various transmembrane signaling systems. The beta and gamma chains are required for the GTPase activity, for replacement of GDP by GTP, and for G protein-effector interaction. This is Guanine nucleotide-binding protein subunit beta from Nicotiana plumbaginifolia (Leadwort-leaved tobacco).